A 397-amino-acid chain; its full sequence is Phosphoglycerate kinase (397 aa).

Residues 21 to 23 (DFN), Arg-37, 60 to 63 (HLGR), Arg-119, and Arg-152 each bind substrate. ATP-binding positions include Lys-203, Gly-294, Glu-325, and 354-357 (GGDS).

This sequence belongs to the phosphoglycerate kinase family. Monomer.

Its subcellular location is the cytoplasm. The catalysed reaction is (2R)-3-phosphoglycerate + ATP = (2R)-3-phospho-glyceroyl phosphate + ADP. It functions in the pathway carbohydrate degradation; glycolysis; pyruvate from D-glyceraldehyde 3-phosphate: step 2/5. In Pelodictyon phaeoclathratiforme (strain DSM 5477 / BU-1), this protein is Phosphoglycerate kinase.